Here is a 256-residue protein sequence, read N- to C-terminus: DNA repair protein RecO (256 aa).

It belongs to the RecO family.

Involved in DNA repair and RecF pathway recombination. In Delftia acidovorans (strain DSM 14801 / SPH-1), this protein is DNA repair protein RecO.